The chain runs to 417 residues: Phosphoglycerate kinase 1 (417 aa).

(2R)-3-phosphoglycerate-binding residues include Val-23, Asp-24, Phe-25, Asn-26, Asn-38, Arg-39, Ser-62, His-63, Gly-65, Arg-66, Leu-121, Arg-122, His-168, and Arg-169. Gly-212 is an ADP binding site. A CDP-binding site is contributed by Gly-212. AMP contacts are provided by Ala-213 and Lys-214. Position 213 (Ala-213) interacts with ATP. Ala-213 is a binding site for Mg(2+). Asp-217 contacts CDP. Asp-217 provides a ligand contact to Mg(2+). Residue Lys-218 participates in AMP binding. Lys-218 serves as a coordination point for ATP. Gly-236 is a binding site for ADP. Gly-236 is a binding site for CDP. Positions 237 and 311 each coordinate AMP. Gly-237 and Gly-311 together coordinate ATP. CDP contacts are provided by Gly-336 and Phe-341. Phe-341 provides a ligand contact to ADP. Glu-342 serves as a coordination point for AMP. ATP-binding residues include Glu-342, Asp-374, and Thr-375. Asp-374 lines the Mg(2+) pocket.

The protein belongs to the phosphoglycerate kinase family. Monomer. Requires Mg(2+) as cofactor.

Its subcellular location is the cytoplasm. It is found in the mitochondrion. The catalysed reaction is (2R)-3-phosphoglycerate + ATP = (2R)-3-phospho-glyceroyl phosphate + ADP. Its pathway is carbohydrate degradation; glycolysis; pyruvate from D-glyceraldehyde 3-phosphate: step 2/5. Functionally, catalyzes one of the two ATP producing reactions in the glycolytic pathway via the reversible conversion of 1,3-diphosphoglycerate to 3-phosphoglycerate. Both L- and D- forms of purine and pyrimidine nucleotides can be used as substrates, but the activity is much lower on pyrimidines. Negatively regulates the biosynthesis of acetyl-CoA from pyruvate in the mitochondrion. In Rhizopus niveus, this protein is Phosphoglycerate kinase 1 (PGK1).